The chain runs to 334 residues: Probable fructose-bisphosphate aldolase class 1 (334 aa).

It belongs to the class I fructose-bisphosphate aldolase family.

The enzyme catalyses beta-D-fructose 1,6-bisphosphate = D-glyceraldehyde 3-phosphate + dihydroxyacetone phosphate. It participates in carbohydrate degradation; glycolysis; D-glyceraldehyde 3-phosphate and glycerone phosphate from D-glucose: step 4/4. The sequence is that of Probable fructose-bisphosphate aldolase class 1 from Xanthomonas axonopodis pv. citri (strain 306).